The chain runs to 106 residues: Cyclin-dependent protein kinase inhibitor SMR15 (106 aa).

Probable cyclin-dependent protein kinase (CDK) inhibitor that functions as a repressor of mitosis in the endoreduplication cell cycle. The chain is Cyclin-dependent protein kinase inhibitor SMR15 from Arabidopsis thaliana (Mouse-ear cress).